The primary structure comprises 297 residues: Probable endonuclease 4 (297 aa).

Positions 69, 110, 145, 179, 182, 214, 227, 229, and 259 each coordinate Zn(2+).

The protein belongs to the AP endonuclease 2 family. Requires Zn(2+) as cofactor.

The enzyme catalyses Endonucleolytic cleavage to 5'-phosphooligonucleotide end-products.. Endonuclease IV plays a role in DNA repair. It cleaves phosphodiester bonds at apurinic or apyrimidinic (AP) sites, generating a 3'-hydroxyl group and a 5'-terminal sugar phosphate. This chain is Probable endonuclease 4, found in Listeria monocytogenes serotype 4b (strain CLIP80459).